Here is a 124-residue protein sequence, read N- to C-terminus: Kalata-B1 (124 aa).

Residues 1–22 form the signal peptide; that stretch reads MAKFTVCLLLCLLLAAFVGAFG. Residues 23 to 88 constitute a propeptide that is removed on maturation; that stretch reads SELSDSHKTT…QVFLKQLQLK (66 aa). Positions 89–117 form a cross-link, cyclopeptide (Gly-Asn); that stretch reads GLPVCGETCVGGTCNTPGCTCSWPVCTRN. 3 cysteine pairs are disulfide-bonded: Cys93/Cys107, Cys97/Cys109, and Cys102/Cys114. The propeptide occupies 118–124; the sequence is GLPSLAA.

The protein belongs to the cyclotide family. Moebius subfamily. Kalata-B1 is a cyclic peptide which occurs in three forms: with unmodified Trp-111, with Trp-111 oxidized to form oxindolylalanine and with Trp-111 oxidized to form N-formylkynurenine. Oxidation is enhanced by exposure to sunlight. In terms of tissue distribution, leaves and stems. Lower in roots.

In terms of biological role, probably participates in a plant defense mechanism. Has antibiotic activity. Has a diuretic effect. Has a uterotonic effect in humans. Active against the Gram-positive S.aureus with a minimum inhibition concentration of approximately 0.2 microM. Relatively ineffective against Gram-negative bacteria such as E.coli and P.aeruginosa. Inhibitory effect on the growth and development of larvae from H.punctigera. The unmodified form has hemolytic activity, the oxidized form lacks hemolytic activity. If the protein is linearized, hemolytic activity is lost. The sequence is that of Kalata-B1 (OAK1) from Oldenlandia affinis.